A 287-amino-acid polypeptide reads, in one-letter code: Putative glutamate--cysteine ligase regulatory subunit (287 aa).

The protein belongs to the aldo/keto reductase family. Glutamate--cysteine ligase light chain subfamily. As to quaternary structure, heterodimer of a catalytic heavy chain and a regulatory light chain.

Its subcellular location is the cytoplasm. The protein operates within sulfur metabolism; glutathione biosynthesis; glutathione from L-cysteine and L-glutamate: step 1/2. The sequence is that of Putative glutamate--cysteine ligase regulatory subunit from Schizosaccharomyces pombe (strain 972 / ATCC 24843) (Fission yeast).